A 578-amino-acid chain; its full sequence is Protein O-linked-mannose beta-1,4-N-acetylglucosaminyltransferase 2 (578 aa).

At 1 to 4 the chain is on the cytoplasmic side; it reads MNIS. The chain crosses the membrane as a helical; Signal-anchor for type II membrane protein span at residues 5–25; the sequence is AVFSALLVSIMAAVLWKHVKL. At 26-578 the chain is on the lumenal side; it reads LDQFYVIEEE…PFAEVLVCST (553 aa). Residues Asn-98, Asn-275, Asn-335, Asn-451, Asn-541, and Asn-563 are each glycosylated (N-linked (GlcNAc...) asparagine). A Fibronectin type-III domain is found at 484-578; sequence RESKCQASAQ…PFAEVLVCST (95 aa).

This sequence belongs to the glycosyltransferase 61 family.

It localises to the endoplasmic reticulum membrane. It carries out the reaction 3-O-(alpha-D-mannosyl)-L-threonyl-[protein] + UDP-N-acetyl-alpha-D-glucosamine = 3-O-(N-acetyl-beta-D-glucosaminyl-(1-&gt;4)-alpha-D-mannosyl)-L-threonyl-[protein] + UDP + H(+). It functions in the pathway protein modification; protein glycosylation. In terms of biological role, O-linked mannose beta-1,4-N-acetylglucosaminyltransferase that transfers UDP-N-acetyl-D-glucosamine to the 4-position of the mannose to generate N-acetyl-D-glucosamine-beta-1,4-O-D-mannosylprotein. Involved in the biosynthesis of the phosphorylated O-mannosyl trisaccharide (N-acetylgalactosamine-beta-3-N-acetylglucosamine-beta-4-(phosphate-6-)mannose), a carbohydrate structure present in alpha-dystroglycan (DAG1), which is required for binding laminin G-like domain-containing extracellular proteins with high affinity. The polypeptide is Protein O-linked-mannose beta-1,4-N-acetylglucosaminyltransferase 2 (pomgnt2) (Xenopus laevis (African clawed frog)).